A 1691-amino-acid chain; its full sequence is Helicase SWR1 (1691 aa).

A disordered region spans residues 1–244 (MPETASTANV…ATSNSTNRSP (244 aa)). 2 stretches are compositionally biased toward basic and acidic residues: residues 14 to 23 (SDPDAIKTEQ) and 54 to 68 (ENHH…DERP). Positions 126 to 155 (LSKSRTSKRSTGANSNTKTEIHLTNGNSRK) are enriched in polar residues. A compositionally biased stretch (low complexity) spans 232-243 (SRTATSNSTNRS). The HSA domain maps to 335 to 409 (PEPAEEPPRQ…RAVWISRYRI (75 aa)). Disordered regions lie at residues 457 to 615 (QARQ…AGGL) and 628 to 801 (MNSE…NHKI). Residues 467–521 (QLSEEDGFDDLSDDMSMADDDELGLASGEDEDDEDGDADSDIMSSDEEEGDEEDQ) show a composition bias toward acidic residues. A compositionally biased stretch (low complexity) spans 564–575 (VDTAQATATENA). Acidic residues-rich tracts occupy residues 576-612 (ETSD…DEDA) and 645-662 (EMPD…EENE). The segment covering 671-692 (PEPHESGALEKSTKEAVEEKEQ) has biased composition (basic and acidic residues). 2 stretches are compositionally biased toward polar residues: residues 706–722 (GLSN…SQDN) and 749–778 (PATN…TAST). One can recognise a Helicase ATP-binding domain in the interval 823 to 988 (AGLYANSTNG…WSLLFFLMPA (166 aa)). 836 to 843 (DEMGLGKT) contacts ATP. The DEAH box motif lies at 939–942 (DEAH). One can recognise a Helicase C-terminal domain in the interval 1375 to 1525 (ILDKLLRKLQ…DVVIQEGEFT (151 aa)). 2 disordered regions span residues 1594 to 1632 (EIQA…GGLD) and 1669 to 1691 (DTKL…TRKR). Residues 1605 to 1618 (KPSNNASGTSTARQ) show a composition bias toward polar residues. The span at 1677–1691 (DKKKGKKKGKDTRKR) shows a compositional bias: basic residues.

It belongs to the SNF2/RAD54 helicase family. SWR1 subfamily. As to quaternary structure, component of the SWR1 chromatin-remodeling complex.

It is found in the nucleus. It carries out the reaction ATP + H2O = ADP + phosphate + H(+). Its function is as follows. Catalytic component of the SWR1 complex which mediates the ATP-dependent exchange of histone H2A for the H2A variant HZT1 leading to transcriptional regulation of selected genes by chromatin remodeling. This Gibberella zeae (strain ATCC MYA-4620 / CBS 123657 / FGSC 9075 / NRRL 31084 / PH-1) (Wheat head blight fungus) protein is Helicase SWR1 (SWR1).